The chain runs to 701 residues: Elongation factor G (701 aa).

The 281-residue stretch at A10–L290 folds into the tr-type G domain. GTP is bound by residues A19 to T26, D83 to H87, and N137 to D140.

It belongs to the TRAFAC class translation factor GTPase superfamily. Classic translation factor GTPase family. EF-G/EF-2 subfamily.

It localises to the cytoplasm. In terms of biological role, catalyzes the GTP-dependent ribosomal translocation step during translation elongation. During this step, the ribosome changes from the pre-translocational (PRE) to the post-translocational (POST) state as the newly formed A-site-bound peptidyl-tRNA and P-site-bound deacylated tRNA move to the P and E sites, respectively. Catalyzes the coordinated movement of the two tRNA molecules, the mRNA and conformational changes in the ribosome. In Tropheryma whipplei (strain TW08/27) (Whipple's bacillus), this protein is Elongation factor G.